The following is a 229-amino-acid chain: UPF0758 protein GSU0386 (229 aa).

The MPN domain occupies 107–229 (RFTSPEQVYN…FTSFVSAGLL (123 aa)). Zn(2+) contacts are provided by H178, H180, and D191. The JAMM motif signature appears at 178–191 (HNHPTGDPAPSRED).

The protein belongs to the UPF0758 family.

The polypeptide is UPF0758 protein GSU0386 (Geobacter sulfurreducens (strain ATCC 51573 / DSM 12127 / PCA)).